The chain runs to 329 residues: GTP 3',8-cyclase (329 aa).

The Radical SAM core domain maps to A8–A234. Residue R17 coordinates GTP. [4Fe-4S] cluster is bound by residues C24 and C28. S-adenosyl-L-methionine is bound at residue Y30. A [4Fe-4S] cluster-binding site is contributed by C31. Position 68 (R68) interacts with GTP. G72 provides a ligand contact to S-adenosyl-L-methionine. GTP is bound at residue T99. S123 provides a ligand contact to S-adenosyl-L-methionine. GTP is bound at residue K160. M194 is an S-adenosyl-L-methionine binding site. [4Fe-4S] cluster contacts are provided by C257 and C260. GTP is bound at residue R262 to R264. [4Fe-4S] cluster is bound at residue C274.

It belongs to the radical SAM superfamily. MoaA family. Monomer and homodimer. It depends on [4Fe-4S] cluster as a cofactor.

The catalysed reaction is GTP + AH2 + S-adenosyl-L-methionine = (8S)-3',8-cyclo-7,8-dihydroguanosine 5'-triphosphate + 5'-deoxyadenosine + L-methionine + A + H(+). It functions in the pathway cofactor biosynthesis; molybdopterin biosynthesis. Its function is as follows. Catalyzes the cyclization of GTP to (8S)-3',8-cyclo-7,8-dihydroguanosine 5'-triphosphate. This is GTP 3',8-cyclase from Shigella boydii serotype 18 (strain CDC 3083-94 / BS512).